We begin with the raw amino-acid sequence, 132 residues long: Small ribosomal subunit protein uS11 (132 aa).

This sequence belongs to the universal ribosomal protein uS11 family. In terms of assembly, part of the 30S ribosomal subunit.

Functionally, located on the platform of the 30S subunit. This is Small ribosomal subunit protein uS11 from Caldivirga maquilingensis (strain ATCC 700844 / DSM 13496 / JCM 10307 / IC-167).